The following is an 866-amino-acid chain: Scm-like with four MBT domains protein 1 (866 aa).

MBT repeat units lie at residues 20–120, 128–232, 242–348, and 356–453; these read LSWE…LEAP, SDWD…LQPP, AEWQ…ISPP, and FDWA…LSTP. Residues 34–42 form an antigenic epitope region; sequence VPYGSFKHV. A disordered region spans residues 641 to 777; that stretch reads KKKNKRIGRP…DDENKPPSPK (137 aa). Basic residues predominate over residues 663–682; sequence KASKRRKRRKNVFVHKKKRS. Polar residues predominate over residues 683-694; sequence SASVDNTPAGSP. Composition is skewed to acidic residues over residues 699–713 and 721–730; these read GEDE…DDSL and QQDELQEESE. Positions 737 to 749 are enriched in low complexity; that stretch reads CSSSPTQSEISTS. Phosphoserine is present on residues serine 767 and serine 775. An SAM domain is found at 796–864; the sequence is WSVADVVRFI…RIKFAFYEQF (69 aa).

As to quaternary structure, interacts with MYOD1. Component of the SLC (SFMBT1-LSD1-CoREST) corepressor complex, which also contains KDM1A/LSD1 and RCOR1/CoREST. Interacts with KDM1A/LSD1 and RCOR1/CoREST. Interacts with L3MBTL3. As to expression, expressed in all cell lines and normal tissues tested, including the thymus.

It is found in the nucleus. Its function is as follows. Histone-binding protein, which is part of various corepressor complexes. Mediates the recruitment of corepressor complexes to target genes, followed by chromatin compaction and repression of transcription. Plays a role during myogenesis: required for the maintenance of undifferentiated states of myogenic progenitor cells via interaction with MYOD1. Interaction with MYOD1 leads to the recruitment of associated corepressors and silencing of MYOD1 target genes. Part of the SLC complex in germ cells, where it may play a role during spermatogenesis. This is Scm-like with four MBT domains protein 1 (SFMBT1) from Homo sapiens (Human).